Consider the following 332-residue polypeptide: Ketol-acid reductoisomerase (NAD(+)) (332 aa).

The region spanning 1-186 (MEILHDEDVD…HWTKAGILEC (186 aa)) is the KARI N-terminal Rossmann domain. Residues 24 to 27 (YGAQ), Glu46, Asn55, Ser57, and 87 to 90 (DEVQ) each bind NAD(+). The active site involves His112. An NAD(+)-binding site is contributed by Gly138. A KARI C-terminal knotted domain is found at 187–332 (TFEQETYEDL…AEIRKLFAQK (146 aa)). 4 residues coordinate Mg(2+): Asp195, Glu199, Glu231, and Glu235. Ser256 is a binding site for substrate.

It belongs to the ketol-acid reductoisomerase family. In terms of assembly, homodimer. Mg(2+) is required as a cofactor.

The catalysed reaction is (2R)-2,3-dihydroxy-3-methylbutanoate + NAD(+) = (2S)-2-acetolactate + NADH + H(+). Its pathway is amino-acid biosynthesis; L-isoleucine biosynthesis; L-isoleucine from 2-oxobutanoate: step 2/4. The protein operates within amino-acid biosynthesis; L-valine biosynthesis; L-valine from pyruvate: step 2/4. Involved in the biosynthesis of branched-chain amino acids (BCAA). Catalyzes an alkyl-migration followed by a ketol-acid reduction of (S)-2-acetolactate (S2AL) to yield (R)-2,3-dihydroxy-isovalerate. In the isomerase reaction, S2AL is rearranged via a Mg-dependent methyl migration to produce 3-hydroxy-3-methyl-2-ketobutyrate (HMKB). In the reductase reaction, this 2-ketoacid undergoes a metal-dependent reduction by NADH to yield (R)-2,3-dihydroxy-isovalerate. The polypeptide is Ketol-acid reductoisomerase (NAD(+)) (Uncultured archaeon GZfos26G2).